A 168-amino-acid polypeptide reads, in one-letter code: Protein SprT (168 aa).

Residues 20-166 (EKLQQANKYL…RHCQAILQLI (147 aa)) enclose the SprT-like domain. H78 provides a ligand contact to Zn(2+). The active site involves E79. Residue H82 participates in Zn(2+) binding.

The protein belongs to the SprT family. Requires Zn(2+) as cofactor.

The protein localises to the cytoplasm. The polypeptide is Protein SprT (Proteus mirabilis (strain HI4320)).